We begin with the raw amino-acid sequence, 1393 residues long: DNA-directed RNA polymerase subunit beta'' (1393 aa).

Residues Cys224, Cys295, Cys302, and Cys305 each coordinate Zn(2+).

This sequence belongs to the RNA polymerase beta' chain family. RpoC2 subfamily. As to quaternary structure, in plastids the minimal PEP RNA polymerase catalytic core is composed of four subunits: alpha, beta, beta', and beta''. When a (nuclear-encoded) sigma factor is associated with the core the holoenzyme is formed, which can initiate transcription. Zn(2+) is required as a cofactor.

The protein resides in the plastid. The protein localises to the chloroplast. The catalysed reaction is RNA(n) + a ribonucleoside 5'-triphosphate = RNA(n+1) + diphosphate. Its function is as follows. DNA-dependent RNA polymerase catalyzes the transcription of DNA into RNA using the four ribonucleoside triphosphates as substrates. The sequence is that of DNA-directed RNA polymerase subunit beta'' from Manihot esculenta (Cassava).